A 164-amino-acid polypeptide reads, in one-letter code: NADPH-dependent 7-cyano-7-deazaguanine reductase (164 aa).

Cys-55 functions as the Thioimide intermediate in the catalytic mechanism. The active-site Proton donor is Asp-62. Residues 77-79 (VES) and 96-97 (HE) each bind substrate.

This sequence belongs to the GTP cyclohydrolase I family. QueF type 1 subfamily.

The protein resides in the cytoplasm. The enzyme catalyses 7-aminomethyl-7-carbaguanine + 2 NADP(+) = 7-cyano-7-deazaguanine + 2 NADPH + 3 H(+). Its pathway is tRNA modification; tRNA-queuosine biosynthesis. Functionally, catalyzes the NADPH-dependent reduction of 7-cyano-7-deazaguanine (preQ0) to 7-aminomethyl-7-deazaguanine (preQ1). In Bacillus velezensis (strain DSM 23117 / BGSC 10A6 / LMG 26770 / FZB42) (Bacillus amyloliquefaciens subsp. plantarum), this protein is NADPH-dependent 7-cyano-7-deazaguanine reductase.